A 142-amino-acid chain; its full sequence is Translation initiation factor 2 subunit beta (142 aa).

This sequence belongs to the eIF-2-beta/eIF-5 family. As to quaternary structure, heterotrimer composed of an alpha, a beta and a gamma chain.

In terms of biological role, eIF-2 functions in the early steps of protein synthesis by forming a ternary complex with GTP and initiator tRNA. This chain is Translation initiation factor 2 subunit beta, found in Methanosphaera stadtmanae (strain ATCC 43021 / DSM 3091 / JCM 11832 / MCB-3).